We begin with the raw amino-acid sequence, 280 residues long: Pantothenate synthetase (280 aa).

26-33 provides a ligand contact to ATP; the sequence is MGNLHEGH. H33 (proton donor) is an active-site residue. Q57 is a (R)-pantoate binding site. Beta-alanine is bound at residue Q57. An ATP-binding site is contributed by 145–148; that stretch reads GKKD. Position 151 (Q151) interacts with (R)-pantoate. ATP-binding positions include V174 and 182-185; that span reads LSSR.

Belongs to the pantothenate synthetase family. Homodimer.

It localises to the cytoplasm. The enzyme catalyses (R)-pantoate + beta-alanine + ATP = (R)-pantothenate + AMP + diphosphate + H(+). It functions in the pathway cofactor biosynthesis; (R)-pantothenate biosynthesis; (R)-pantothenate from (R)-pantoate and beta-alanine: step 1/1. Functionally, catalyzes the condensation of pantoate with beta-alanine in an ATP-dependent reaction via a pantoyl-adenylate intermediate. This Bordetella avium (strain 197N) protein is Pantothenate synthetase.